The sequence spans 258 residues: UBX domain-containing protein 2A (258 aa).

The tract at residues 1–152 (MKEVDNLDSI…SATPRIVSKA (152 aa)) is required for interaction with CHRNA3. The tract at residues 1–165 (MKEVDNLDSI…EVDNKSTLSA (165 aa)) is required for inhibition of CHRNA3 ubiquitination and translocation of CHRNA3 to the plasma membrane resulting in an increase in acetylcholine-gated nicotinic acetylcholine receptor currents. Residues 61 to 125 (QVDVNIKLWK…VEDKKNEVCM (65 aa)) enclose the SEP domain. The segment at 168–258 (LNNLEPITRI…QKTAEPFRKL (91 aa)) is required for interaction with VCP. Residues 170 to 247 (NLEPITRIQI…DLQNAVIIQR (78 aa)) enclose the UBX domain.

As to quaternary structure, part of a complex composed of STUB1/CHIP, VCP/p97, CHRNA3, and UBXN2A that modulates the ubiquitination and endoplasmic reticulum-associated degradation (ERAD) of CHRNA3. Within the complex UBXN2A acts as a scaffold protein required for the interaction of CHRNA3 with VCP/p97, this interaction also inhibits CHRNA3 ubiquitination by STUB1/CHIP and subsequently ERAD. Interacts (via SEP domain) with CHRNA3 and interacts (via UBX domain) with VCP/P97; these interactions are required for the interaction of CHRNA3 with the STUB1-VCP-UBXN2A complex. Interacts with HSPA9/MOT-2 (via SBD domain); the interaction inhibits HSPA9/MOT-2 interaction with and degradation of p53, thereby promotes p53 translocation to the nucleus. Interacts with RICTOR. Post-translationally, ubiquitinated.

It localises to the golgi apparatus. The protein resides in the endoplasmic reticulum. Its subcellular location is the perikaryon. The protein localises to the cell projection. It is found in the dendrite. It localises to the nucleus. The protein resides in the cytoplasm. Its function is as follows. Acts to repress the ubiquitination and subsequent endoplasmic reticulum-associated degradation of CHRNA3 by the STUB1-VCP-UBXN2A complex in cortical neurons. Also acts to promote the translocation of CHRNA3 to the plasma membrane and subsequently increases plasma membrane acetylcholine-gated ion-channel activation. Plays a role in the inhibition of STUB1-mediated TP53 degradation, via its interaction with HSPA9 which acts to inhibit TP53 binding to HSPA9. Positively mediates the ubiquitination and proteosomal degradation of RICTOR, may thereby act as a negative regulator of the mTORC2 pathway. The sequence is that of UBX domain-containing protein 2A from Rattus norvegicus (Rat).